A 339-amino-acid chain; its full sequence is Phenylalanine--tRNA ligase alpha subunit (339 aa).

Glu-250 is a binding site for Mg(2+).

Belongs to the class-II aminoacyl-tRNA synthetase family. Phe-tRNA synthetase alpha subunit type 1 subfamily. As to quaternary structure, tetramer of two alpha and two beta subunits. Mg(2+) serves as cofactor.

The protein resides in the cytoplasm. The enzyme catalyses tRNA(Phe) + L-phenylalanine + ATP = L-phenylalanyl-tRNA(Phe) + AMP + diphosphate + H(+). This is Phenylalanine--tRNA ligase alpha subunit from Flavobacterium psychrophilum (strain ATCC 49511 / DSM 21280 / CIP 103535 / JIP02/86).